A 185-amino-acid chain; its full sequence is Putative manganese efflux pump MntP (185 aa).

6 helical membrane passes run L8 to L28, I42 to F62, I66 to L86, M103 to L123, I137 to L157, and K165 to M185.

Belongs to the MntP (TC 9.B.29) family.

It is found in the cell membrane. Functionally, probably functions as a manganese efflux pump. The polypeptide is Putative manganese efflux pump MntP (Clostridium novyi (strain NT)).